Reading from the N-terminus, the 244-residue chain is Small ribosomal subunit protein eS4 (244 aa).

Residues 43–106 (LPLLLVVRDV…DENYLVLFDE (64 aa)) enclose the S4 RNA-binding domain.

This sequence belongs to the eukaryotic ribosomal protein eS4 family.

This Methanococcus maripaludis (strain C7 / ATCC BAA-1331) protein is Small ribosomal subunit protein eS4.